The chain runs to 323 residues: Transcription factor MYB108 (323 aa).

2 consecutive HTH myb-type domains span residues 16 to 68 (EMDL…LNYL) and 69 to 123 (RPDV…QKHA). 2 DNA-binding regions (H-T-H motif) span residues 44 to 68 (WNSLSRCAGLQRTGKSCRLRWLNYL) and 96 to 119 (WSKIAQYLPGRTDNEIKNYWRTRV).

In terms of assembly, interacts with BOI, but not with BRG1. In terms of processing, ubiquitinated in vitro by BOI. As to expression, expressed specifically in flowers. Restricted to anthers in maturing flowers. Strongest expression in the vascular and connective tissue where the anther attaches to the filament. Not detected in pollen.

The protein resides in the nucleus. In terms of biological role, transcription factor contributing to the regulation of stamen maturation and male fertility in response to jasmonate signaling. Required for correct timing of anther dehiscence. Acts as a negative regulator of abscisic acid-induced cell death. Not involved in the regulation of BOI. Regulated by MYB21 and at a lower level by MYB24. Negatively regulated by the proteasome in an SCF(COI1) E3 ubiquitin-protein ligase complex-dependent manner. In Arabidopsis thaliana (Mouse-ear cress), this protein is Transcription factor MYB108 (MYB108).